Consider the following 94-residue polypeptide: Progonadoliberin-1 (94 aa).

A signal peptide spans 1 to 22 (MAAKILALWLLLAGTVFPQGCC). Gln23 carries the post-translational modification Pyrrolidone carboxylic acid. The residue at position 32 (Gly32) is a Glycine amide.

This sequence belongs to the GnRH family. Synthesized in preoptic neurons and is transported to the pituitary in the preoptic-hypophyseal axons.

The protein resides in the secreted. In terms of biological role, stimulates the secretion of gonadotropins. May be responsible for the regulation of the hypothalamic-pituitary-gonadal axis. In Haplochromis burtoni (Burton's mouthbrooder), this protein is Progonadoliberin-1 (gnrh1).